We begin with the raw amino-acid sequence, 146 residues long: Hemoglobin subunit beta-1 (146 aa).

The Globin domain maps to 2-146 (HWTEKERTII…VVSALGKQYH (145 aa)). Heme b contacts are provided by His-63 and His-92.

This sequence belongs to the globin family. In terms of assembly, hb1 is a heterotetramer of two alpha chains and two beta-1 chains. Red blood cells.

In terms of biological role, involved in oxygen transport from gills to the various peripheral tissues. This is Hemoglobin subunit beta-1 from Dissostichus eleginoides (Patagonian toothfish).